A 490-amino-acid polypeptide reads, in one-letter code: MSTRVRYAPSPTGLQHIGGIRTALFNYFFAKSCGGKFLLRIEDTDQSRYSPEAENDLYSSLKWLGISFDEGPVVGGDYAPYVQSQRSAIYKQYAKYLIESGHAYYCYCSPERLERIKKIQNINKMPPGYDRHCRNLSNEEVENALIKKIKPVVRFKIPLEGDTSFDDILLGRITWANKDISPDPVILKSDGLPTYHLANVVDDYLMKITHVLRAQEWVSSGPLHVLLYKAFKWKPPIYCHLPMVMGNDGQKLSKRHGSTALRQFIEDGYLPEAIINYVTLLGWSYDDKREFFSKNDLEQFFSIEKINKSPAIFDYHKLDFFNSYYIREKKDEDLFNLLLPFFQKKGYVSKPSTLEENQKLKLLIPLIKSRIKKLSDALNMTKFFYEDIKSWNLDEFLSRKKTAKEVCSILELIKPILEGFEKRSSEENDKIFYDFAESNGFKLGEILLPIRIAALGSKVSPPLFDSLKLIGKSKVFERIKLAQEFLRINE.

The short motif at 9–19 is the 'HIGH' region element; sequence PSPTGLQHIGG. Positions 251–255 match the 'KMSKS' region motif; sequence KLSKR. An ATP-binding site is contributed by Lys254.

The protein belongs to the class-I aminoacyl-tRNA synthetase family. Glutamate--tRNA ligase type 1 subfamily. In terms of assembly, monomer.

It is found in the cytoplasm. The enzyme catalyses tRNA(Glu) + L-glutamate + ATP = L-glutamyl-tRNA(Glu) + AMP + diphosphate. Functionally, catalyzes the attachment of glutamate to tRNA(Glu) in a two-step reaction: glutamate is first activated by ATP to form Glu-AMP and then transferred to the acceptor end of tRNA(Glu). This is Glutamate--tRNA ligase from Borreliella burgdorferi (strain ATCC 35210 / DSM 4680 / CIP 102532 / B31) (Borrelia burgdorferi).